A 1252-amino-acid chain; its full sequence is Myosin-3 (1252 aa).

Positions 36 to 715 (VGVSDLTLLS…TLFALENMRD (680 aa)) constitute a Myosin motor domain. ATP is bound at residue 129 to 136 (GESGAGKT). At Ser-357 the chain carries Phosphoserine. Residues 404–486 (SIGILDIYGF…PGIFAAMNDA (83 aa)) are actin-binding. 2 consecutive IQ domains span residues 719 to 739 (YNMA…RIDA) and 740 to 767 (AIRI…AGDK). In terms of domain architecture, TH1 spans 773-963 (KERRNMSLLG…TILVRHGNPP (191 aa)). 3 disordered regions span residues 988–1086 (KTMK…KTSV), 1106–1136 (YSLP…PSEL), and 1203–1252 (INEP…DDDW). A compositionally biased stretch (low complexity) spans 997-1016 (KRTPQALPTSSLAASAAQAA). Polar residues-rich tracts occupy residues 1050 to 1063 (PVRN…NSKV), 1106 to 1121 (YSLP…TDSY), and 1203 to 1219 (INEP…NTDL). The 63-residue stretch at 1116-1178 (SQTDSYQAAY…PTSYIVKYNG (63 aa)) folds into the SH3 domain. The segment covering 1238–1252 (SEEDISREEDDDDDW) has biased composition (acidic residues).

It belongs to the TRAFAC class myosin-kinesin ATPase superfamily. Myosin family. In terms of processing, phosphorylation of the TEDS site (Ser-357) is required for the polarization of the actin cytoskeleton. Phosphorylation probably activates the myosin-I ATPase activity.

The protein localises to the cytoplasm. Its subcellular location is the cytoskeleton. It is found in the actin patch. In terms of biological role, type-I myosin implicated in the organization of the actin cytoskeleton. Required for proper actin cytoskeleton polarization. At the cell cortex, assembles in patch-like structures together with proteins from the actin-polymerizing machinery and promotes actin assembly. Functions as actin nucleation-promoting factor (NPF) for the Arp2/3 complex. The chain is Myosin-3 (MYO3) from Candida glabrata (strain ATCC 2001 / BCRC 20586 / JCM 3761 / NBRC 0622 / NRRL Y-65 / CBS 138) (Yeast).